The primary structure comprises 169 residues: Phycobiliprotein beta chain (169 aa).

Asparagine 72 carries the N4-methylasparagine modification. Cysteine 82 lines the (2R,3E)-phycocyanobilin pocket.

It belongs to the phycobiliprotein family. As to quaternary structure, heterodimer of an alpha and a beta chain. Contains one covalently linked bilin chromophore.

The protein resides in the cellular thylakoid membrane. In terms of biological role, light-harvesting photosynthetic bile pigment-protein from the phycobiliprotein complex. This is a protein functionally equivalent to, but with weaker absorbance than, allophycocyanin beta chain. This Mastigocladus laminosus (Fischerella sp.) protein is Phycobiliprotein beta chain (apcD).